The primary structure comprises 83 residues: MANIKSAIKRVKTTEKAEARNISQKSAMRTAVKNAKTAVSNNADNKNELVSLAVKLVDKAAQSNLIHSNKADRIKSQLMTANK.

This sequence belongs to the bacterial ribosomal protein bS20 family.

Binds directly to 16S ribosomal RNA. In Staphylococcus aureus (strain JH1), this protein is Small ribosomal subunit protein bS20.